Reading from the N-terminus, the 356-residue chain is 3'-5' exonuclease (356 aa).

The segment at 1 to 120 is disordered; the sequence is MDKYLIKMPT…TPSPEKEKPE (120 aa). Composition is skewed to basic and acidic residues over residues 29–56 and 71–85; these read TIDK…ENTP and KNQD…IKNE. Over residues 99–113 the composition is skewed to low complexity; that stretch reads LTRSTRSMAEEGTPS. Phosphoserine occurs at positions 105 and 113. In terms of domain architecture, 3'-5' exonuclease spans 155-316; it reads TTLDVVPMAF…GQVIYRDLEQ (162 aa). Asp165, Glu167, and Asp303 together coordinate Mg(2+).

It belongs to the WRNexo family.

The protein resides in the nucleus. Its function is as follows. Has exonuclease activity on both single-stranded and duplex templates bearing overhangs, but not blunt ended duplex DNA, and cleaves in a 3'-5' direction. Essential for the formation of DNA replication focal centers. Has an important role in maintaining genome stability. The protein is 3'-5' exonuclease of Drosophila willistoni (Fruit fly).